Reading from the N-terminus, the 299-residue chain is Probable lipid kinase YegS (299 aa).

The DAGKc domain occupies 2 to 133 (AEFPASLLIL…IDMAQVNKQT (132 aa)). Residues Thr40, 66–72 (GDGTINE), and Thr95 contribute to the ATP site. The Mg(2+) site is built by Leu215, Asp218, and Leu220. Catalysis depends on Glu271, which acts as the Proton acceptor.

Belongs to the diacylglycerol/lipid kinase family. YegS lipid kinase subfamily. The cofactor is Mg(2+). Ca(2+) is required as a cofactor.

The protein localises to the cytoplasm. Probably phosphorylates lipids; the in vivo substrate is unknown. The sequence is that of Probable lipid kinase YegS from Escherichia coli O45:K1 (strain S88 / ExPEC).